The chain runs to 211 residues: 1-deoxy-D-xylulose 5-phosphate reductoisomerase (211 aa).

Asp-14 is a Mn(2+) binding site. Ser-15, Glu-16, Ser-40, His-63, Ser-76, Asn-81, Lys-82, and Glu-85 together coordinate 1-deoxy-D-xylulose 5-phosphate. Glu-16 provides a ligand contact to Mn(2+). Residue Glu-85 coordinates Mn(2+).

It belongs to the DXR family. The cofactor is Mn(2+). Mg(2+) serves as cofactor. Mostly expressed in flowers and, to a lower extent, in leaves.

It is found in the plastid. Its subcellular location is the chloroplast stroma. The catalysed reaction is 2-C-methyl-D-erythritol 4-phosphate + NADP(+) = 1-deoxy-D-xylulose 5-phosphate + NADPH + H(+). It participates in isoprenoid biosynthesis; isopentenyl diphosphate biosynthesis via DXP pathway; isopentenyl diphosphate from 1-deoxy-D-xylulose 5-phosphate: step 1/6. In terms of biological role, enzyme of the plastid non-mevalonate pathway for isoprenoid biosynthesis that catalyzes the NADPH-dependent rearrangement and reduction of 1-deoxy-D-xylulose-5-phosphate (DXP) to 2-C-methyl-D-erythritol 4-phosphate (MEP). Required for chloroplast development. This Thymus vulgaris (Thyme) protein is 1-deoxy-D-xylulose 5-phosphate reductoisomerase.